We begin with the raw amino-acid sequence, 346 residues long: S-adenosylmethionine:tRNA ribosyltransferase-isomerase (346 aa).

The protein belongs to the QueA family. Monomer.

The protein localises to the cytoplasm. It catalyses the reaction 7-aminomethyl-7-carbaguanosine(34) in tRNA + S-adenosyl-L-methionine = epoxyqueuosine(34) in tRNA + adenine + L-methionine + 2 H(+). It participates in tRNA modification; tRNA-queuosine biosynthesis. Its function is as follows. Transfers and isomerizes the ribose moiety from AdoMet to the 7-aminomethyl group of 7-deazaguanine (preQ1-tRNA) to give epoxyqueuosine (oQ-tRNA). This Shewanella frigidimarina (strain NCIMB 400) protein is S-adenosylmethionine:tRNA ribosyltransferase-isomerase.